The chain runs to 289 residues: tRNA pseudouridine synthase B (289 aa).

Asp-38 (nucleophile) is an active-site residue.

Belongs to the pseudouridine synthase TruB family. Type 1 subfamily.

The enzyme catalyses uridine(55) in tRNA = pseudouridine(55) in tRNA. Functionally, responsible for synthesis of pseudouridine from uracil-55 in the psi GC loop of transfer RNAs. The chain is tRNA pseudouridine synthase B from Clostridium novyi (strain NT).